The sequence spans 670 residues: DNA ligase (670 aa).

NAD(+) is bound by residues 32–36, 81–82, and glutamate 113; these read DAEYD and SL. The active-site N6-AMP-lysine intermediate is the lysine 115. NAD(+) is bound by residues arginine 136, glutamate 173, lysine 290, and lysine 314. 4 residues coordinate Zn(2+): cysteine 408, cysteine 411, cysteine 426, and cysteine 432. In terms of domain architecture, BRCT spans 592 to 670; the sequence is EIDSPFAGKT…EAEMIRLLGE (79 aa).

This sequence belongs to the NAD-dependent DNA ligase family. LigA subfamily. Mg(2+) is required as a cofactor. Requires Mn(2+) as cofactor.

The catalysed reaction is NAD(+) + (deoxyribonucleotide)n-3'-hydroxyl + 5'-phospho-(deoxyribonucleotide)m = (deoxyribonucleotide)n+m + AMP + beta-nicotinamide D-nucleotide.. In terms of biological role, DNA ligase that catalyzes the formation of phosphodiester linkages between 5'-phosphoryl and 3'-hydroxyl groups in double-stranded DNA using NAD as a coenzyme and as the energy source for the reaction. It is essential for DNA replication and repair of damaged DNA. In Yersinia pseudotuberculosis serotype IB (strain PB1/+), this protein is DNA ligase.